The chain runs to 148 residues: Ribonuclease pancreatic (148 aa).

Positions 1-25 (MGLEKSLILLPLLVLVFGWVQPSLG) are cleaved as a signal peptide. Lys32 and Arg35 together coordinate substrate. The active-site Proton acceptor is His37. 4 disulfides stabilise this stretch: Cys50-Cys108, Cys64-Cys119, Cys82-Cys134, and Cys89-Cys96. Asn58 carries an N-linked (GlcNAc...) asparagine glycan. Position 65-69 (65-69 (KPVNT)) interacts with substrate. N-linked (GlcNAc...) asparagine glycosylation is present at Asn86. 2 residues coordinate substrate: Lys90 and Arg109. Residue His143 is the Proton donor of the active site.

This sequence belongs to the pancreatic ribonuclease family. As to quaternary structure, monomer. Interacts with and forms tight 1:1 complexes with RNH1. Dimerization of two such complexes may occur. Interaction with RNH1 inhibits this protein. As to expression, pancreas.

It is found in the secreted. The catalysed reaction is an [RNA] containing cytidine + H2O = an [RNA]-3'-cytidine-3'-phosphate + a 5'-hydroxy-ribonucleotide-3'-[RNA].. It carries out the reaction an [RNA] containing uridine + H2O = an [RNA]-3'-uridine-3'-phosphate + a 5'-hydroxy-ribonucleotide-3'-[RNA].. In terms of biological role, endonuclease that catalyzes the cleavage of RNA on the 3' side of pyrimidine nucleotides. Acts on single-stranded and double-stranded RNA. This Myodes glareolus (Bank vole) protein is Ribonuclease pancreatic (RNASE1).